The primary structure comprises 270 residues: FKBP-type peptidyl-prolyl cis-trans isomerase FkpA (270 aa).

Residues 1–25 (MKSLFKVTLLATTMAVALHAPITFA) form the signal peptide. The PPIase FKBP-type domain occupies 164–249 (SDTVVVNYKG…VFDVELLDVK (86 aa)).

Belongs to the FKBP-type PPIase family.

The protein resides in the periplasm. It carries out the reaction [protein]-peptidylproline (omega=180) = [protein]-peptidylproline (omega=0). Its function is as follows. PPIases accelerate the folding of proteins. It catalyzes the cis-trans isomerization of proline imidic peptide bonds in oligopeptides. The protein is FKBP-type peptidyl-prolyl cis-trans isomerase FkpA (fkpA) of Escherichia coli (strain K12).